The following is a 134-amino-acid chain: MSWQTYVDDHLMCDIEGHEGHRLTAAAIVGQDGSVWAQSATFPQFKPEEMNGIMTDFNEPGHLAPTGLHLGGTKYMVIQGEAGAVIRGKKGSGGITIKKTGQALVFGIYEEPVTPGQCNMVVERLGDYLLEQGL.

A disulfide bond links Cys13 and Cys118. The Involved in PIP2 interaction signature appears at 84-100 (AVIRGKKGSGGITIKKT). Thr114 bears the Phosphothreonine mark.

This sequence belongs to the profilin family. In terms of assembly, occurs in many kinds of cells as a complex with monomeric actin in a 1:1 ratio. Post-translationally, phosphorylated by MAP kinases.

The protein localises to the cytoplasm. It localises to the cytoskeleton. In terms of biological role, binds to actin and affects the structure of the cytoskeleton. At high concentrations, profilin prevents the polymerization of actin, whereas it enhances it at low concentrations. The sequence is that of Profilin-2 from Olea europaea (Common olive).